A 122-amino-acid chain; its full sequence is Large ribosomal subunit protein bL12 (122 aa).

The protein belongs to the bacterial ribosomal protein bL12 family. In terms of assembly, homodimer. Part of the ribosomal stalk of the 50S ribosomal subunit. Forms a multimeric L10(L12)X complex, where L10 forms an elongated spine to which 2 to 4 L12 dimers bind in a sequential fashion. Binds GTP-bound translation factors.

Its function is as follows. Forms part of the ribosomal stalk which helps the ribosome interact with GTP-bound translation factors. Is thus essential for accurate translation. This Azotobacter vinelandii (strain DJ / ATCC BAA-1303) protein is Large ribosomal subunit protein bL12.